A 251-amino-acid polypeptide reads, in one-letter code: uncharacterized protein (251 aa).

It belongs to the FAM243 family.

This is an uncharacterized protein from Mus musculus (Mouse).